We begin with the raw amino-acid sequence, 312 residues long: Ribosomal RNA small subunit methyltransferase H (312 aa).

S-adenosyl-L-methionine is bound by residues 32-34 (AGH), Asp52, Phe79, Asp100, and Gln107.

This sequence belongs to the methyltransferase superfamily. RsmH family.

The protein resides in the cytoplasm. It carries out the reaction cytidine(1402) in 16S rRNA + S-adenosyl-L-methionine = N(4)-methylcytidine(1402) in 16S rRNA + S-adenosyl-L-homocysteine + H(+). Its function is as follows. Specifically methylates the N4 position of cytidine in position 1402 (C1402) of 16S rRNA. This is Ribosomal RNA small subunit methyltransferase H from Listeria monocytogenes serotype 4b (strain CLIP80459).